We begin with the raw amino-acid sequence, 450 residues long: Phosphoglucosamine mutase (450 aa).

Residue S102 is the Phosphoserine intermediate of the active site. The Mg(2+) site is built by S102, D243, D245, and D247. Phosphoserine is present on S102.

This sequence belongs to the phosphohexose mutase family. Requires Mg(2+) as cofactor. In terms of processing, activated by phosphorylation.

The enzyme catalyses alpha-D-glucosamine 1-phosphate = D-glucosamine 6-phosphate. Its function is as follows. Catalyzes the conversion of glucosamine-6-phosphate to glucosamine-1-phosphate. The chain is Phosphoglucosamine mutase from Rhizobium leguminosarum bv. trifolii (strain WSM2304).